The chain runs to 159 residues: Large ribosomal subunit protein uL23m (159 aa).

It belongs to the universal ribosomal protein uL23 family. As to quaternary structure, component of the mitochondrial ribosome large subunit (39S) which comprises a 16S rRNA and about 50 distinct proteins.

Its subcellular location is the mitochondrion. In Caenorhabditis briggsae, this protein is Large ribosomal subunit protein uL23m (mrpl-23).